The sequence spans 595 residues: Tyrosine-protein phosphatase cdcA (595 aa).

The interval 32 to 57 (TPFPYPAEQPKSPSKRRAQASPSKKR) is disordered. The span at 44–57 (PSKRRAQASPSKKR) shows a compositional bias: basic residues. Residues 233 to 381 (LPSTVSEVRS…QGSFREWWFE (149 aa)) form the Tyrosine-protein phosphatase domain. Catalysis depends on cysteine 322, which acts as the Phosphocysteine intermediate. Residues 392-595 (QPNPVTPGRS…GSPVRVKAQA (204 aa)) form a disordered region. Positions 449–461 (RKSHRKDSRHHPY) are enriched in basic residues. Positions 471–483 (VDKDTRKTRRSTD) are enriched in basic and acidic residues. Residues 502–526 (SKSPAASPGQRSISYSATVTASYTL) show a composition bias toward polar residues.

It belongs to the protein-tyrosine phosphatase family. Non-receptor class CDC14 subfamily.

Its subcellular location is the nucleus. The protein resides in the cytoplasm. It localises to the cell septum. It catalyses the reaction O-phospho-L-tyrosyl-[protein] + H2O = L-tyrosyl-[protein] + phosphate. Its function is as follows. Protein phosphatase which antagonizes mitotic cyclin-dependent kinase nimX, the inactivation of which is essential for exit from mitosis. To access its substrates, is released from nucleolar sequestration during mitosis. Plays an essential in coordinating the nuclear division cycle with cytokinesis through the cytokinesis checkpoint. Involved in chromosome segregation, where it is required for meiosis I spindle dissambly as well as for establishing two consecutive chromosome segregation phases. Required for the transcription of the two major endoglucanase genes eglA and eglB and growth on synthetic cellulose as the sole carbon source. This is Tyrosine-protein phosphatase cdcA (cdcA) from Emericella nidulans (strain FGSC A4 / ATCC 38163 / CBS 112.46 / NRRL 194 / M139) (Aspergillus nidulans).